Reading from the N-terminus, the 487-residue chain is DEAD-box ATP-dependent RNA helicase CshA (487 aa).

Positions Ile3–Ala31 match the Q motif motif. The 171-residue stretch at Ile34–Val204 folds into the Helicase ATP-binding domain. Ala47–Thr54 serves as a coordination point for ATP. The short motif at Asp152–Asp155 is the DEAD box element. The Helicase C-terminal domain occupies Asn215–Ala375. Residues Asp428–Leu440 show a composition bias toward basic and acidic residues. Residues Asp428–Ser487 form a disordered region. Residues Arg441–Lys454 show a composition bias toward basic residues. Over residues Ser469–Arg479 the composition is skewed to basic and acidic residues.

This sequence belongs to the DEAD box helicase family. CshA subfamily. Oligomerizes, may be a member of the RNA degradosome.

The protein resides in the cytoplasm. The catalysed reaction is ATP + H2O = ADP + phosphate + H(+). Functionally, DEAD-box RNA helicase possibly involved in RNA degradation. Unwinds dsRNA in both 5'- and 3'-directions, has RNA-dependent ATPase activity. In Bacillus licheniformis (strain ATCC 14580 / DSM 13 / JCM 2505 / CCUG 7422 / NBRC 12200 / NCIMB 9375 / NCTC 10341 / NRRL NRS-1264 / Gibson 46), this protein is DEAD-box ATP-dependent RNA helicase CshA.